The sequence spans 292 residues: Ornithine decarboxylase antizyme (292 aa).

The protein belongs to the ODC antizyme family. As to quaternary structure, interacts with ODC/SPE1 and thereby sterically blocks ODC homodimerization.

Ornithine decarboxylase (ODC) antizyme protein that negatively regulates ODC activity and intracellular polyamine biosynthesis in response to increased intracellular polyamine levels. Binds to ODC/SPE1 monomers, inhibiting the assembly of the functional ODC homodimer, and targets the monomers for ubiquitin-independent proteolytic destruction by the 26S proteasome. The chain is Ornithine decarboxylase antizyme (OAZ1) from Saccharomyces cerevisiae (strain ATCC 204508 / S288c) (Baker's yeast).